A 144-amino-acid chain; its full sequence is TSC22 domain family protein 1 (144 aa).

The segment at 77 to 98 (LKEQIKELIEKNSQLEQENNLL) is leucine-zipper. Residues 109-144 (QFQAQLQTGSPPATTQPQGTTQPPAQPASQGSGPTA) form a disordered region. The segment covering 115 to 144 (QTGSPPATTQPQGTTQPPAQPASQGSGPTA) has biased composition (low complexity).

The protein belongs to the TSC-22/Dip/Bun family. In terms of assembly, forms homodimers. Forms a heterodimer with TSC22D4/THG1. Interacts with histone H1-2. Interacts with GNL3.

The protein localises to the cytoplasm. The protein resides in the nucleus. Its function is as follows. Transcriptional repressor. Plays a role in the repression of hematopoietic precursor cell growth. Promotes IL2 deprivation-induced apoptosis in T-lymphocytes, via repression of TSC22D3/GILZ transcription and activation of the caspase cascade. Positively regulates cell death in response to TGFB3 during mammary gland involution. The protein is TSC22 domain family protein 1 of Bos taurus (Bovine).